The primary structure comprises 187 residues: Photosystem I assembly protein Ycf4 (187 aa).

The next 2 membrane-spanning stretches (helical) occupy residues 25–45 (YLWAIIVTMGGIGFLLSGISS) and 69–89 (MSFYGLLGTIYGIFLWLTVIW).

This sequence belongs to the Ycf4 family.

Its subcellular location is the cellular thylakoid membrane. Its function is as follows. Seems to be required for the assembly of the photosystem I complex. The polypeptide is Photosystem I assembly protein Ycf4 (Trichodesmium erythraeum (strain IMS101)).